The primary structure comprises 316 residues: Glutathione synthetase (316 aa).

The 187-residue stretch at 125-311 folds into the ATP-grasp domain; sequence KLFTAWFPEL…ITGMLMNAIE (187 aa). ATP is bound at residue 151–207; sequence HQKHGDVIFKPLDGMGGASIFRLKKDDPNVGVIIETLTEHGNRFCMAQNFLPAIKEG. Mg(2+) contacts are provided by Glu-281 and Asn-283.

Belongs to the prokaryotic GSH synthase family. It depends on Mg(2+) as a cofactor. Requires Mn(2+) as cofactor.

The catalysed reaction is gamma-L-glutamyl-L-cysteine + glycine + ATP = glutathione + ADP + phosphate + H(+). It functions in the pathway sulfur metabolism; glutathione biosynthesis; glutathione from L-cysteine and L-glutamate: step 2/2. The sequence is that of Glutathione synthetase from Photorhabdus laumondii subsp. laumondii (strain DSM 15139 / CIP 105565 / TT01) (Photorhabdus luminescens subsp. laumondii).